Consider the following 149-residue polypeptide: UPF0310 protein SSO2595 (149 aa).

The protein belongs to the UPF0310 family.

In Saccharolobus solfataricus (strain ATCC 35092 / DSM 1617 / JCM 11322 / P2) (Sulfolobus solfataricus), this protein is UPF0310 protein SSO2595.